The primary structure comprises 354 residues: Uroporphyrinogen decarboxylase (354 aa).

Substrate is bound by residues 27–31 (RQAGR), aspartate 77, tyrosine 154, threonine 209, and histidine 327.

This sequence belongs to the uroporphyrinogen decarboxylase family. As to quaternary structure, homodimer.

It is found in the cytoplasm. It catalyses the reaction uroporphyrinogen III + 4 H(+) = coproporphyrinogen III + 4 CO2. It participates in porphyrin-containing compound metabolism; protoporphyrin-IX biosynthesis; coproporphyrinogen-III from 5-aminolevulinate: step 4/4. Its function is as follows. Catalyzes the decarboxylation of four acetate groups of uroporphyrinogen-III to yield coproporphyrinogen-III. The sequence is that of Uroporphyrinogen decarboxylase from Escherichia coli O6:K15:H31 (strain 536 / UPEC).